A 289-amino-acid polypeptide reads, in one-letter code: Protease HtpX homolog (289 aa).

Helical transmembrane passes span 11–31 and 36–54; these read AALF…IGAG and APIW…YGYW. Zn(2+) is bound at residue H138. E139 is a catalytic residue. H142 contacts Zn(2+). Transmembrane regions (helical) follow at residues 153–173 and 182–202; these read VAAA…FFGG and LAMI…QMAI. E207 contributes to the Zn(2+) binding site.

It belongs to the peptidase M48B family. Zn(2+) serves as cofactor.

It localises to the cell membrane. In Pseudarthrobacter chlorophenolicus (strain ATCC 700700 / DSM 12829 / CIP 107037 / JCM 12360 / KCTC 9906 / NCIMB 13794 / A6) (Arthrobacter chlorophenolicus), this protein is Protease HtpX homolog.